A 337-amino-acid chain; its full sequence is Anthranilate phosphoribosyltransferase (337 aa).

5-phospho-alpha-D-ribose 1-diphosphate-binding positions include glycine 81, 84 to 85, serine 89, 91 to 94, 109 to 117, and alanine 121; these read GD, NVST, and KHGNRAATS. Glycine 81 serves as a coordination point for anthranilate. Residue serine 93 coordinates Mg(2+). Asparagine 112 provides a ligand contact to anthranilate. Arginine 167 provides a ligand contact to anthranilate. Positions 226 and 227 each coordinate Mg(2+).

Belongs to the anthranilate phosphoribosyltransferase family. As to quaternary structure, homodimer. Mg(2+) is required as a cofactor.

It catalyses the reaction N-(5-phospho-beta-D-ribosyl)anthranilate + diphosphate = 5-phospho-alpha-D-ribose 1-diphosphate + anthranilate. Its pathway is amino-acid biosynthesis; L-tryptophan biosynthesis; L-tryptophan from chorismate: step 2/5. In terms of biological role, catalyzes the transfer of the phosphoribosyl group of 5-phosphorylribose-1-pyrophosphate (PRPP) to anthranilate to yield N-(5'-phosphoribosyl)-anthranilate (PRA). This Methylorubrum extorquens (strain CM4 / NCIMB 13688) (Methylobacterium extorquens) protein is Anthranilate phosphoribosyltransferase.